We begin with the raw amino-acid sequence, 86 residues long: Small ribosomal subunit protein uS17 (86 aa).

It belongs to the universal ribosomal protein uS17 family. As to quaternary structure, part of the 30S ribosomal subunit.

In terms of biological role, one of the primary rRNA binding proteins, it binds specifically to the 5'-end of 16S ribosomal RNA. The protein is Small ribosomal subunit protein uS17 of Methylococcus capsulatus (strain ATCC 33009 / NCIMB 11132 / Bath).